The primary structure comprises 412 residues: Dihydrolipoyllysine-residue acetyltransferase component of pyruvate dehydrogenase complex (412 aa).

Residues 2–78 (PIKILMPALS…PVNSLIAVLS (77 aa)) enclose the Lipoyl-binding domain. Position 43 is an N6-lipoyllysine (Lys43). A Peripheral subunit-binding (PSBD) domain is found at 132–169 (FASPLAKRLAKMRNIRFESVKGSGPHGRIVKQDILSYT). His385 is a catalytic residue.

The protein belongs to the 2-oxoacid dehydrogenase family. As to quaternary structure, forms a 24-polypeptide structural core with octahedral symmetry. The cofactor is (R)-lipoate.

The enzyme catalyses N(6)-[(R)-dihydrolipoyl]-L-lysyl-[protein] + acetyl-CoA = N(6)-[(R)-S(8)-acetyldihydrolipoyl]-L-lysyl-[protein] + CoA. Its function is as follows. The pyruvate dehydrogenase complex catalyzes the overall conversion of pyruvate to acetyl-CoA and CO(2). It contains multiple copies of three enzymatic components: pyruvate dehydrogenase (E1), dihydrolipoamide acetyltransferase (E2) and lipoamide dehydrogenase (E3). In Rickettsia conorii (strain ATCC VR-613 / Malish 7), this protein is Dihydrolipoyllysine-residue acetyltransferase component of pyruvate dehydrogenase complex (pdhC).